The chain runs to 603 residues: Elongation factor 4 (603 aa).

Positions aspartate 7 to glutamine 191 constitute a tr-type G domain. GTP contacts are provided by residues aspartate 19–threonine 24 and asparagine 138–aspartate 141.

This sequence belongs to the TRAFAC class translation factor GTPase superfamily. Classic translation factor GTPase family. LepA subfamily.

The protein resides in the cell inner membrane. The enzyme catalyses GTP + H2O = GDP + phosphate + H(+). Functionally, required for accurate and efficient protein synthesis under certain stress conditions. May act as a fidelity factor of the translation reaction, by catalyzing a one-codon backward translocation of tRNAs on improperly translocated ribosomes. Back-translocation proceeds from a post-translocation (POST) complex to a pre-translocation (PRE) complex, thus giving elongation factor G a second chance to translocate the tRNAs correctly. Binds to ribosomes in a GTP-dependent manner. The sequence is that of Elongation factor 4 from Rhodopseudomonas palustris (strain HaA2).